A 644-amino-acid chain; its full sequence is Kininogen-1 (644 aa).

The N-terminal stretch at 1 to 18 (MKLITILFLCSRLLLSLT) is a signal peptide. Position 19 is a pyrrolidone carboxylic acid; in mature form (Gln19). One can recognise a Cystatin kininogen-type 1 domain in the interval 28-132 (CNDKDLFKAV…TQTCQITPAE (105 aa)). 9 disulfides stabilise this stretch: Cys28/Cys614, Cys83/Cys94, Cys107/Cys126, Cys142/Cys145, Cys206/Cys218, Cys229/Cys248, Cys264/Cys267, Cys328/Cys340, and Cys351/Cys370. Asn48 is a glycosylation site (N-linked (GlcNAc...) (complex) asparagine). Residues 120-153 (SVATQTCQITPAEGPVVTAQYDCLGCVHPISTQS) are O-glycosylated at one site only. The region spanning 151–254 (TQSPDLEPIL…SQNCDIYPGK (104 aa)) is the Cystatin kininogen-type 2 domain. The N-linked (GlcNAc...) asparagine glycan is linked to Asn169. Asn205 carries N-linked (GlcNAc...) (complex) asparagine glycosylation. Positions 273 to 376 (TNSPELEETL…TVNCQPLGMI (104 aa)) constitute a Cystatin kininogen-type 3 domain. A glycan (N-linked (GlcNAc...) (complex) asparagine) is linked at Asn294. Residue Ser332 is modified to Phosphoserine; by FAM20C. Pro383 is subject to 4-hydroxyproline; partial. The tract at residues 387-555 (PFRSSRIGEI…TPIPSLAKPG (169 aa)) is disordered. A glycan (O-linked (GalNAc...) threonine) is linked at Thr401. The span at 418–434 (DSGKEQGHTRRHDWGHE) shows a compositional bias: basic and acidic residues. 3 repeats span residues 420–449 (GKEQ…KHER), 450–479 (DQGH…KFKL), and 480–510 (DDDL…KNKG). Residues 435 to 446 (KQRKHNLGHGHK) are compositionally biased toward basic residues. Residues 477–493 (FKLDDDLEHQGGHVLDH) show a composition bias toward basic and acidic residues. The segment covering 494-518 (GHKHKHGHGHGKHKNKGKKNGKHNG) has biased composition (basic residues). Over residues 524-539 (LASSSEDSTTPSAQTQ) the composition is skewed to polar residues. 5 O-linked (GalNAc...) threonine glycosylation sites follow: Thr533, Thr542, Thr546, Thr557, and Thr571. Ser577 is a glycosylation site (O-linked (GalNAc...) serine). Thr628 is a glycosylation site (O-linked (GalNAc...) threonine).

As to quaternary structure, interacts (high molecular weight kininogen) (via amino acids 402-532) with triafestin-1 and triafestin-2, anticoagulant proteins from Triatoma infestans. Interacts (high molecular weight kininogen) (via amino acids 402-532) with short form salivary protein D7R1, an anticoagulant protein from Anopheles stephensi. Interacts (high molecular weight kininogen) (via amino acids 421-466 and 459-513) with haemaphysalin, an anticoagulant protein from Haemaphysalis longicornis. Bradykinin is inactivated by ACE, which removes the dipeptide Arg-Phe from its C-terminus. Post-translationally, bradykinin is released from kininogen by plasma kallikrein. In terms of processing, hydroxylation of Pro-383 occurs prior to the release of bradykinin. Phosphorylated by FAM20C in the extracellular medium. Post-translationally, N- and O-glycosylated. O-glycosylated with core 1 or possibly core 8 glycans. In terms of processing, (Microbial infection) Bradykinin is generated upon proteolytic cleavage by S.pyogenes SpeB to produce hypotension during septic shock. As to expression, secreted in plasma. T-kinin is detected in malignant ovarian, colon and breast carcinomas, but not in benign tumors.

It is found in the secreted. The protein localises to the extracellular space. Kininogens are inhibitors of thiol proteases. HMW-kininogen plays an important role in blood coagulation by helping to position optimally prekallikrein and factor XI next to factor XII; HMW-kininogen inhibits the thrombin- and plasmin-induced aggregation of thrombocytes. LMW-kininogen inhibits the aggregation of thrombocytes. LMW-kininogen is in contrast to HMW-kininogen not involved in blood clotting. Its function is as follows. The active peptide bradykinin is a potent vasodilatator that is released from HMW-kininogen shows a variety of physiological effects: (A) influence in smooth muscle contraction, (B) induction of hypotension, (C) natriuresis and diuresis, (D) decrease in blood glucose level, (E) it is a mediator of inflammation and causes (E1) increase in vascular permeability, (E2) stimulation of nociceptors (4E3) release of other mediators of inflammation (e.g. prostaglandins), (F) it has a cardioprotective effect (directly via bradykinin action, indirectly via endothelium-derived relaxing factor action). This Homo sapiens (Human) protein is Kininogen-1 (KNG1).